Here is a 205-residue protein sequence, read N- to C-terminus: Lipoprotein MlpB (205 aa).

Positions 1 to 17 are cleaved as a signal peptide; sequence MKIINILFCLLLIVLNS. Cysteine 18 carries the N-palmitoyl cysteine lipid modification. Cysteine 18 carries the S-diacylglycerol cysteine lipid modification.

The protein belongs to the Multicopy lipoprotein (Mlp) family.

It localises to the cell outer membrane. In terms of biological role, an outer membrane protein that may participate in pathogenesis. Some human Lyme disease patients have antibodies against this protein. The Mlp proteins probably undergo intragenic recombination, generating new alleles. The chain is Lipoprotein MlpB from Borreliella burgdorferi (strain ATCC 35210 / DSM 4680 / CIP 102532 / B31) (Borrelia burgdorferi).